The following is a 542-amino-acid chain: ATP synthase subunit alpha (542 aa).

ATP is bound at residue 176–183 (GDRQTGKT).

Belongs to the ATPase alpha/beta chains family. In terms of assembly, F-type ATPases have 2 components, CF(1) - the catalytic core - and CF(0) - the membrane proton channel. CF(1) has five subunits: alpha(3), beta(3), gamma(1), delta(1), epsilon(1). CF(0) has three main subunits: a(1), b(2) and c(9-12). The alpha and beta chains form an alternating ring which encloses part of the gamma chain. CF(1) is attached to CF(0) by a central stalk formed by the gamma and epsilon chains, while a peripheral stalk is formed by the delta and b chains.

It is found in the cell membrane. The catalysed reaction is ATP + H2O + 4 H(+)(in) = ADP + phosphate + 5 H(+)(out). In terms of biological role, produces ATP from ADP in the presence of a proton gradient across the membrane. The alpha chain is a regulatory subunit. The protein is ATP synthase subunit alpha of Tropheryma whipplei (strain TW08/27) (Whipple's bacillus).